The chain runs to 341 residues: B3 domain-containing transcription factor VRN1 (341 aa).

Positions 5–98 form a DNA-binding region, TF-B3 1; the sequence is FFHKLIFSST…AFSVYIFNLS (94 aa). The tract at residues 166-223 is disordered; sequence GPVKAEEPTPTPKIPKKRGRKKKNADPEEINSSAPRDDDPENRSKFYESASARKRTVT. Residues 179–188 are compositionally biased toward basic residues; that stretch reads IPKKRGRKKK. The segment covering 200-211 has biased composition (basic and acidic residues); sequence PRDDDPENRSKF. Positions 244–338 form a DNA-binding region, TF-B3 2; that stretch reads FRVVLRPSYL…VLKVTAFRVN (95 aa).

Expressed in roots and at lower levels in aerial parts.

It localises to the nucleus. Its function is as follows. Essential protein. Involved in the regulation of vernalization. Acts as a transcriptional repressor of FLC, a major target of the vernalization pathway. Binds DNA in vitro in a non-sequence-specific manner. This Arabidopsis thaliana (Mouse-ear cress) protein is B3 domain-containing transcription factor VRN1.